A 146-amino-acid polypeptide reads, in one-letter code: Suppressor APC domain-containing protein 1 (146 aa).

A disordered region spans residues histidine 121–valine 146. A compositionally biased stretch (pro residues) spans proline 137–valine 146.

This Mus musculus (Mouse) protein is Suppressor APC domain-containing protein 1 (Sapcd1).